The chain runs to 117 residues: Structural toxin peptide sea anemone type 9a (117 aa).

The first 23 residues, 1 to 23, serve as a signal peptide directing secretion; the sequence is MKTIIAIFSLAAMIVLVRPTPLE. Repeat copies occupy residues 28–56, 57–88, and 89–117. Residues 29–117 are 3 X approximate tandem repeats; it reads RSIINVPCKK…GKCRKIHGCS (89 aa).

In terms of processing, contains 6 disulfide bonds. As to expression, expressed outside of acontia.

The protein resides in the secreted. Its subcellular location is the nematocyst. In terms of biological role, putative neurotoxin. The sequence is that of Structural toxin peptide sea anemone type 9a from Calliactis polypus (Hermit crab anemone).